We begin with the raw amino-acid sequence, 369 residues long: DNA replication and repair protein RecF (369 aa).

30 to 37 (GDNAQGKT) is an ATP binding site.

Belongs to the RecF family.

The protein resides in the cytoplasm. The RecF protein is involved in DNA metabolism; it is required for DNA replication and normal SOS inducibility. RecF binds preferentially to single-stranded, linear DNA. It also seems to bind ATP. This is DNA replication and repair protein RecF from Streptococcus equi subsp. zooepidemicus (strain H70).